The chain runs to 320 residues: SUN domain-containing protein 3 (320 aa).

Topologically, residues 1-6 (MLTRSW) are nuclear. The chain crosses the membrane as a helical span at residues 7–29 (KIILSTVFISTFLLVGLLNHQWL). Residues 30–320 (KETEFPQKPR…RVHGIPSDYT (291 aa)) lie on the Perinuclear space side of the membrane. Positions 63–102 (KEQQELLKKESQTLENNFREILFLIEQIDVLKALLKDMKD) form a coiled coil. Positions 156–317 (GASVIEAGTS…YRFRVHGIPS (162 aa)) constitute an SUN domain.

As to quaternary structure, self-associates. Interacts with SYNE1 and SPAG4/SUN4. Proposed to form a spermatogenesis-specific LINC complex with SYNE1 during sperm head formation possibly implicating a SUN domain-based heterotrimer with SPAG4/SUN4 associating with SYNE1. Can interact with SYNE3; the interaction is questioned by missing colocalization in spermatids. As to expression, specifically expressed in testis (at protein level).

The protein localises to the membrane. The protein resides in the nucleus envelope. It is found in the nucleus inner membrane. In terms of biological role, as a probable component of the LINC (LInker of Nucleoskeleton and Cytoskeleton) complex, involved in the connection between the nuclear lamina and the cytoskeleton. The nucleocytoplasmic interactions established by the LINC complex play an important role in the transmission of mechanical forces across the nuclear envelope and in nuclear movement and positioning. May be involved in nuclear remodeling during sperm head formation in spermatogenesis. A probable SUN3:SYNE1 LINC complex may tether spermatid nuclei to posterior cytoskeletal structures such as the manchette. This Mus musculus (Mouse) protein is SUN domain-containing protein 3 (Sun3).